A 354-amino-acid polypeptide reads, in one-letter code: MGFCIPLRLKMLKRGSRKFSSMLARRHTPKKMNIVTDLENRLKKNSYIENTNQGNILMDSIFVSTMSVETLFGSYITDDSDDYELKDLLNVTYNIKPVIVPDIKLDAVLDRDGNFRPADCFLVKLKHRDGFTKGALYLGHSAGFTATICLKNEGVSGLYIPGTSVIRTNICQGDTIVSRSSRGVQFLLQIGGEAIFLIVSLCPTKKLVETGFVIPNISSNDNAKIAARILSEKRKDTITHIDTLIQYGQQLELAYYNSCMLTEFLHYCNLYANTIKESLLKETIQKDINITHTNITTLLNETAKVIKLVKSLVDKEDTDIVNNFITKEIKNCGGVKNRDTIVNSLSLSNLDFYL.

Belongs to the orthopoxvirus OPG055 family.

In terms of biological role, stimulates increases in peripheral microtubule dynamics and may increase the motility of the infected cells, contributing to cell-to-cell spread of the virus. Seems to inhibit the signaling via the GTPase RHOA and DIAPH1/mDia. This Homo sapiens (Human) protein is Protein OPG055 (OPG055).